Consider the following 412-residue polypeptide: Argininosuccinate synthase (412 aa).

8 to 16 is an ATP binding site; sequence AYSGGLDTS. L-citrulline is bound at residue Tyr87. Position 117 (Gly117) interacts with ATP. Thr119, Asn123, and Asp124 together coordinate L-aspartate. Asn123 provides a ligand contact to L-citrulline. L-citrulline is bound by residues Arg127, Ser175, Glu259, and Tyr271.

It belongs to the argininosuccinate synthase family. Type 1 subfamily. In terms of assembly, homotetramer.

The protein localises to the cytoplasm. It carries out the reaction L-citrulline + L-aspartate + ATP = 2-(N(omega)-L-arginino)succinate + AMP + diphosphate + H(+). It functions in the pathway amino-acid biosynthesis; L-arginine biosynthesis; L-arginine from L-ornithine and carbamoyl phosphate: step 2/3. The sequence is that of Argininosuccinate synthase from Clavibacter michiganensis subsp. michiganensis (strain NCPPB 382).